The sequence spans 194 residues: Early E3 22.1 kDa glycoprotein (194 aa).

N19, N60, N75, N87, N125, and N138 each carry an N-linked (GlcNAc...) asparagine; by host glycan.

The sequence is that of Early E3 22.1 kDa glycoprotein from Canine adenovirus serotype 1 (strain RI261) (CAdV-1).